Consider the following 328-residue polypeptide: Cell division protein ZipA (328 aa).

Residues M1–N4 lie on the Periplasmic side of the membrane. Residues T5–S25 traverse the membrane as a helical segment. At N26–V328 the chain is on the cytoplasmic side. The segment at S44–L82 is disordered. The segment covering Q57–V67 has biased composition (polar residues).

Belongs to the ZipA family. In terms of assembly, interacts with FtsZ via their C-terminal domains.

It is found in the cell inner membrane. Functionally, essential cell division protein that stabilizes the FtsZ protofilaments by cross-linking them and that serves as a cytoplasmic membrane anchor for the Z ring. Also required for the recruitment to the septal ring of downstream cell division proteins. This Haemophilus influenzae (strain ATCC 51907 / DSM 11121 / KW20 / Rd) protein is Cell division protein ZipA.